The primary structure comprises 167 residues: Photosystem I assembly protein Ycf3 (167 aa).

TPR repeat units lie at residues 35 to 68 (AFSYYRDGMSAQSEGEYAEALANYYEALNLEEDP), 72 to 105 (SFILYNIGLIHASNGEYVKALDYYHKALEANNKL), and 120 to 153 (AVKASEINDLETAQALFHEAAQYWKQAIKLAPSN).

This sequence belongs to the Ycf3 family.

The protein localises to the plastid. Its subcellular location is the chloroplast thylakoid membrane. Its function is as follows. Essential for the assembly of the photosystem I (PSI) complex. May act as a chaperone-like factor to guide the assembly of the PSI subunits. The polypeptide is Photosystem I assembly protein Ycf3 (Galdieria sulphuraria (Red alga)).